We begin with the raw amino-acid sequence, 351 residues long: Adenine deaminase (351 aa).

Histidine 19, histidine 21, and histidine 208 together coordinate Zn(2+). Residue glutamate 211 is the Proton donor of the active site. A Zn(2+)-binding site is contributed by aspartate 288. Aspartate 289 contributes to the substrate binding site.

This sequence belongs to the metallo-dependent hydrolases superfamily. Adenosine and AMP deaminases family. Adenine deaminase type 2 subfamily. The cofactor is Zn(2+).

The protein resides in the cytoplasm. It is found in the nucleus. The catalysed reaction is adenine + H2O + H(+) = hypoxanthine + NH4(+). In terms of biological role, catalyzes the hydrolytic deamination of adenine to hypoxanthine. Plays an important role in the purine salvage pathway and in nitrogen catabolism. The protein is Adenine deaminase (aah1) of Aspergillus oryzae (strain ATCC 42149 / RIB 40) (Yellow koji mold).